Consider the following 359-residue polypeptide: N-acetylneuraminate-9-phosphate synthase (359 aa).

Lys-61, Lys-74, and Lys-79 each carry N6-acetyllysine. The residue at position 275 (Ser-275) is a Phosphoserine. Lys-290 carries the post-translational modification N6-acetyllysine. One can recognise an AFP-like domain in the interval 294–353 (SVVAKVKIPAGTTLTLDMLTVKVGEPKGYPPEDIFNLAGKKVLVTIEEDDTVMEESVESH).

As to expression, ubiquitous.

The protein resides in the cytoplasm. The enzyme catalyses aldehydo-N-acetyl-D-mannosamine 6-phosphate + phosphoenolpyruvate + H2O = N-acetylneuraminate 9-phosphate + phosphate. Catalyzes condensation of phosphoenolpyruvate (PEP) and N-acetylmannosamine 6-phosphate (ManNAc-6-P) to synthesize N-acetylneuraminate-9-phosphate (Neu5Ac-9-P). Neu5Ac-9-P is the phosphorylated forms of sialic acid N-acetylneuraminic acid (Neu5Ac). In contrast with human ortholog, has no detectable activity towards D-mannose 6-phosphate. The protein is N-acetylneuraminate-9-phosphate synthase of Mus musculus (Mouse).